The sequence spans 192 residues: MANPNEWSQFYNNNQTFFTTSTTASTAVTTTTAGDTTSIDSRLSPETGRVTKPTRRRSRASRRTPTTLLNTDTSNFRAMVQQYTGGPSAMAFGSGNTTSAFSLTSSSDPSAGSSQQAPWQYNFQPHAPLQPPQRPYMFSLNNVNPVVGYSNMNNPNTMVSGVFGTVDGSGGGGSAPSSKEATNSNSSSSRLQ.

Low complexity predominate over residues 24–38; the sequence is ASTAVTTTTAGDTTS. The interval 24–65 is disordered; sequence ASTAVTTTTAGDTTSIDSRLSPETGRVTKPTRRRSRASRRTP. Positions 52–62 are enriched in basic residues; it reads KPTRRRSRASR. The VQ motif lies at 76-85; the sequence is FRAMVQQYTG. Disordered stretches follow at residues 101–135 and 163–192; these read FSLT…PQRP and FGTV…SRLQ. Low complexity-rich tracts occupy residues 102–114 and 175–192; these read SLTS…AGSS and APSS…SRLQ.

It localises to the nucleus. Functionally, may function as positive regulator of plant growth. In Arabidopsis thaliana (Mouse-ear cress), this protein is VQ motif-containing protein 22.